A 226-amino-acid chain; its full sequence is ATP-dependent dethiobiotin synthetase BioD (226 aa).

14 to 19 is a binding site for ATP; it reads GIGKTF. Residue T18 coordinates Mg(2+). K39 is a catalytic residue. S43 contributes to the substrate binding site. ATP-binding positions include D56, 117-120, 177-178, 206-208, and N213; these read EGVG, NT, and PHI. Residues D56 and E117 each contribute to the Mg(2+) site.

It belongs to the dethiobiotin synthetase family. As to quaternary structure, homodimer. It depends on Mg(2+) as a cofactor.

It is found in the cytoplasm. It catalyses the reaction (7R,8S)-7,8-diammoniononanoate + CO2 + ATP = (4R,5S)-dethiobiotin + ADP + phosphate + 3 H(+). It participates in cofactor biosynthesis; biotin biosynthesis; biotin from 7,8-diaminononanoate: step 1/2. In terms of biological role, catalyzes a mechanistically unusual reaction, the ATP-dependent insertion of CO2 between the N7 and N8 nitrogen atoms of 7,8-diaminopelargonic acid (DAPA, also called 7,8-diammoniononanoate) to form a ureido ring. This is ATP-dependent dethiobiotin synthetase BioD from Xylella fastidiosa (strain Temecula1 / ATCC 700964).